A 282-amino-acid polypeptide reads, in one-letter code: Putative 4-diphosphocytidyl-2-C-methyl-D-erythritol kinase (282 aa).

Lysine 9 is a catalytic residue. An ATP-binding site is contributed by 93–103 (PVSAGLAGGSA). Aspartate 135 is a catalytic residue.

The protein belongs to the GHMP kinase family. IspE subfamily.

It catalyses the reaction 4-CDP-2-C-methyl-D-erythritol + ATP = 4-CDP-2-C-methyl-D-erythritol 2-phosphate + ADP + H(+). In terms of biological role, catalyzes the phosphorylation of the position 2 hydroxy group of 4-diphosphocytidyl-2C-methyl-D-erythritol. This chain is Putative 4-diphosphocytidyl-2-C-methyl-D-erythritol kinase, found in Staphylococcus aureus (strain bovine RF122 / ET3-1).